A 354-amino-acid chain; its full sequence is NADH-quinone oxidoreductase subunit H (354 aa).

10 helical membrane-spanning segments follow: residues 12–32 (LLGGFWPVVWNLIKIVALIAP), 62–82 (PWGLLTPIADAVKLIFKEIIL), 89–109 (GLFLLGPVMTIMPALAAWVVV), 124–144 (LLFLMAITSMEVYGVIIAGWA), 162–182 (VSYEIAMGFALVVVLMVSGTL), 203–223 (FLSWNWLPLFPIFIVYFISGL), 239–259 (EIVAGHMIEYSGMAFAMFFLA), 263–283 (NMILISALAVTMFLGGWLPPI), 291–311 (IPGWIWLGLKTFVVVTMFLWV), and 326–346 (LGWKIFIPITLIWLVVVGLWI).

Belongs to the complex I subunit 1 family. In terms of assembly, NDH-1 is composed of 14 different subunits. Subunits NuoA, H, J, K, L, M, N constitute the membrane sector of the complex.

It localises to the cell inner membrane. It carries out the reaction a quinone + NADH + 5 H(+)(in) = a quinol + NAD(+) + 4 H(+)(out). In terms of biological role, NDH-1 shuttles electrons from NADH, via FMN and iron-sulfur (Fe-S) centers, to quinones in the respiratory chain. The immediate electron acceptor for the enzyme in this species is believed to be ubiquinone. Couples the redox reaction to proton translocation (for every two electrons transferred, four hydrogen ions are translocated across the cytoplasmic membrane), and thus conserves the redox energy in a proton gradient. This subunit may bind ubiquinone. This chain is NADH-quinone oxidoreductase subunit H, found in Methylibium petroleiphilum (strain ATCC BAA-1232 / LMG 22953 / PM1).